A 120-amino-acid chain; its full sequence is Peptidyl-tRNA hydrolase (120 aa).

The protein belongs to the PTH2 family.

Its subcellular location is the cytoplasm. It catalyses the reaction an N-acyl-L-alpha-aminoacyl-tRNA + H2O = an N-acyl-L-amino acid + a tRNA + H(+). The natural substrate for this enzyme may be peptidyl-tRNAs which drop off the ribosome during protein synthesis. This is Peptidyl-tRNA hydrolase from Saccharolobus islandicus (strain Y.N.15.51 / Yellowstone #2) (Sulfolobus islandicus).